The sequence spans 115 residues: UPF0127 protein PH1112 (115 aa).

The protein belongs to the UPF0127 family.

The sequence is that of UPF0127 protein PH1112 from Pyrococcus horikoshii (strain ATCC 700860 / DSM 12428 / JCM 9974 / NBRC 100139 / OT-3).